Reading from the N-terminus, the 206-residue chain is Small ribosomal subunit protein eS1 (206 aa).

It belongs to the eukaryotic ribosomal protein eS1 family.

This is Small ribosomal subunit protein eS1 from Halobacterium salinarum (strain ATCC 29341 / DSM 671 / R1).